A 358-amino-acid chain; its full sequence is Gibberellin 2-beta-dioxygenase 6 (358 aa).

The Fe2OG dioxygenase domain occupies 207–308; that stretch reads DETTCFLRLN…RLSVAYFLCP (102 aa). A 2-oxoglutarate-binding site is contributed by Y218. The Fe cation site is built by H233, D235, and H289. 2 residues coordinate 2-oxoglutarate: R299 and S301.

It belongs to the iron/ascorbate-dependent oxidoreductase family. GA2OX subfamily. The cofactor is L-ascorbate. It depends on Fe(2+) as a cofactor. Expressed in panicles. Expressed at low levels in young shoots, leaf blades and elongating internodes.

Its subcellular location is the cytoplasm. The protein resides in the nucleus. It carries out the reaction gibberellin A1 + 2-oxoglutarate + O2 = gibberellin A8 + succinate + CO2. Functionally, catalyzes the 2-beta-hydroxylation of several biologically active gibberellins, leading to the homeostatic regulation of their endogenous level. Catabolism of gibberellins (GAs) plays a central role in plant development. In vitro, converts GA12 and GA53 to the corresponding 2-beta-hydroxylated products GA110 and GA97, respectively. This chain is Gibberellin 2-beta-dioxygenase 6, found in Oryza sativa subsp. japonica (Rice).